The following is a 55-amino-acid chain: Large ribosomal subunit protein bL33C (55 aa).

It belongs to the bacterial ribosomal protein bL33 family.

This chain is Large ribosomal subunit protein bL33C, found in Kineococcus radiotolerans (strain ATCC BAA-149 / DSM 14245 / SRS30216).